The sequence spans 226 residues: MVSLRRRRLLGLCCGPNGYVTPLPFLTAEEMITGIPNPNARAAYNPGPAETVTTVIVEKKAIEERSRRTRSKHMHFRSDYSDISPVNSDSISPKYQPPKRRKQHRRKRVHNQEPCLMRGVYYKNMKWQAAIKVEKKQIHLGTFSSQEEAARLYDRAAFMCGREPNFELSEEVIRELKQQSWEEFLNCTRRTITNKKPKSRIEHEDTKINASMPHQPEEEEQDSDKM.

Disordered stretches follow at residues 63–109 (EERS…RKRV) and 195–226 (KKPK…SDKM). Positions 97–109 (PPKRRKQHRRKRV) are enriched in basic residues. The AP2/ERF DNA-binding region spans 105–171 (RRKRVHNQEP…REPNFELSEE (67 aa)). A compositionally biased stretch (acidic residues) spans 217–226 (EEEEQDSDKM).

The protein belongs to the AP2/ERF transcription factor family.

It localises to the nucleus. Probably acts as a transcriptional activator. Binds to the GCC-box pathogenesis-related promoter element. May be involved in the regulation of gene expression by stress factors and by components of stress signal transduction pathways. This chain is Ethylene-responsive transcription factor-like protein At4g13040, found in Arabidopsis thaliana (Mouse-ear cress).